The sequence spans 716 residues: Interleukin-31 receptor subunit alpha (716 aa).

A signal peptide spans 1-18 (MWTLALWAFSFLCKFSLA). Topologically, residues 19–499 (VLPTKPENIS…TNGVRINFKT (481 aa)) are extracellular. Fibronectin type-III domains are found at residues 23-115 (KPEN…IAKT), 117-211 (PPII…TMEE), 213-304 (PHVL…ILRI), 305-403 (PDVH…QAYA), and 408-502 (PLKG…TLSI). 3 N-linked (GlcNAc...) asparagine glycosylation sites follow: asparagine 36, asparagine 48, and asparagine 64. Asparagine 382 is a glycosylation site (N-linked (GlcNAc...) asparagine). The chain crosses the membrane as a helical span at residues 500-520 (LSISVFEIVLLTSLVGGGLLL). Residues 521–716 (LSIKTVTFGL…NIPEHSKGEV (196 aa)) are Cytoplasmic-facing. Disordered regions lie at residues 622 to 641 (EYVTSPSRPDGPPGKSFKEP) and 648 to 696 (ASED…LKNS). The span at 670–679 (QPSSSCQSPG) shows a compositional bias: polar residues.

This sequence belongs to the type I cytokine receptor family. Type 2 subfamily. As to quaternary structure, heterodimer with OSMR. Interacts with JAK1 and STAT3. In terms of processing, N-glycosylated. Expressed in a subset of dorsal root ganglia neurons. Expressed in spinal cord and trigeminal ganglion (at protein level). Expressed in skin, testis, bone marrow and thymus.

Its subcellular location is the cell membrane. The protein localises to the presynaptic cell membrane. The protein resides in the cell projection. It is found in the axon. Its function is as follows. Associates with OSMR to form the interleukin-31 receptor which activates STAT3 and to a lower extent STAT1 and STAT5. May function in skin immunity. Mediates IL31-induced itch, probably in a manner dependent on cation channels TRPA1 and TRPV1. Positively regulates numbers and cycling status of immature subsets of myeloid progenitor cells in bone marrow in vivo and enhances myeloid progenitor cell survival in vitro. This chain is Interleukin-31 receptor subunit alpha (Il31ra), found in Mus musculus (Mouse).